The primary structure comprises 61 residues: Large ribosomal subunit protein eL24 (61 aa).

Cysteine 7, cysteine 10, cysteine 33, and cysteine 37 together coordinate Zn(2+). The segment at cysteine 7–cysteine 37 adopts a C4-type zinc-finger fold.

The protein belongs to the eukaryotic ribosomal protein eL24 family. As to quaternary structure, part of the 50S ribosomal subunit. Forms a cluster with proteins L3 and L14. The cofactor is Zn(2+).

In terms of biological role, binds to the 23S rRNA. The chain is Large ribosomal subunit protein eL24 from Saccharolobus islandicus (strain Y.N.15.51 / Yellowstone #2) (Sulfolobus islandicus).